Here is a 209-residue protein sequence, read N- to C-terminus: Imidazole glycerol phosphate synthase subunit HisH (209 aa).

In terms of domain architecture, Glutamine amidotransferase type-1 spans 4 to 209; it reads PVVVFEYGSG…RLLANWIGSL (206 aa). Cysteine 82 functions as the Nucleophile in the catalytic mechanism. Active-site residues include histidine 190 and glutamate 192.

Heterodimer of HisH and HisF.

The protein resides in the cytoplasm. It carries out the reaction 5-[(5-phospho-1-deoxy-D-ribulos-1-ylimino)methylamino]-1-(5-phospho-beta-D-ribosyl)imidazole-4-carboxamide + L-glutamine = D-erythro-1-(imidazol-4-yl)glycerol 3-phosphate + 5-amino-1-(5-phospho-beta-D-ribosyl)imidazole-4-carboxamide + L-glutamate + H(+). It catalyses the reaction L-glutamine + H2O = L-glutamate + NH4(+). Its pathway is amino-acid biosynthesis; L-histidine biosynthesis; L-histidine from 5-phospho-alpha-D-ribose 1-diphosphate: step 5/9. Functionally, IGPS catalyzes the conversion of PRFAR and glutamine to IGP, AICAR and glutamate. The HisH subunit catalyzes the hydrolysis of glutamine to glutamate and ammonia as part of the synthesis of IGP and AICAR. The resulting ammonia molecule is channeled to the active site of HisF. This chain is Imidazole glycerol phosphate synthase subunit HisH, found in Leifsonia xyli subsp. xyli (strain CTCB07).